Reading from the N-terminus, the 668-residue chain is UvrABC system protein B (668 aa).

The Helicase ATP-binding domain maps to 36 to 276 (DNIKGGEKAQ…EEAIKNIMEE (241 aa)). 49–56 (GATGTGKT) serves as a coordination point for ATP. Residues 102 to 125 (YYDYYQPEAYVPSSDTYIEKDSSV) carry the Beta-hairpin motif. The Helicase C-terminal domain maps to 440-606 (QMDDLLGEIN…TIKKEIRDLI (167 aa)). In terms of domain architecture, UVR spans 632-667 (QEAIKKLQKQMHEAAELLDFELAAQIRDMVLELKSM).

This sequence belongs to the UvrB family. As to quaternary structure, forms a heterotetramer with UvrA during the search for lesions. Interacts with UvrC in an incision complex.

It localises to the cytoplasm. The UvrABC repair system catalyzes the recognition and processing of DNA lesions. A damage recognition complex composed of 2 UvrA and 2 UvrB subunits scans DNA for abnormalities. Upon binding of the UvrA(2)B(2) complex to a putative damaged site, the DNA wraps around one UvrB monomer. DNA wrap is dependent on ATP binding by UvrB and probably causes local melting of the DNA helix, facilitating insertion of UvrB beta-hairpin between the DNA strands. Then UvrB probes one DNA strand for the presence of a lesion. If a lesion is found the UvrA subunits dissociate and the UvrB-DNA preincision complex is formed. This complex is subsequently bound by UvrC and the second UvrB is released. If no lesion is found, the DNA wraps around the other UvrB subunit that will check the other stand for damage. The chain is UvrABC system protein B from Streptococcus thermophilus (strain ATCC BAA-491 / LMD-9).